The sequence spans 507 residues: Serine hydroxymethyltransferase (507 aa).

The residue at position 283 (Lys283) is an N6-(pyridoxal phosphate)lysine.

This sequence belongs to the SHMT family. In terms of assembly, homotetramer. The cofactor is pyridoxal 5'-phosphate.

It carries out the reaction (6R)-5,10-methylene-5,6,7,8-tetrahydrofolate + glycine + H2O = (6S)-5,6,7,8-tetrahydrofolate + L-serine. It participates in one-carbon metabolism; tetrahydrofolate interconversion. In terms of biological role, interconversion of serine and glycine. This Caenorhabditis elegans protein is Serine hydroxymethyltransferase (mel-32).